The sequence spans 874 residues: Alanine--tRNA ligase (874 aa).

Residues His565, His569, Cys666, and His670 each contribute to the Zn(2+) site.

It belongs to the class-II aminoacyl-tRNA synthetase family. The cofactor is Zn(2+).

The protein localises to the cytoplasm. The enzyme catalyses tRNA(Ala) + L-alanine + ATP = L-alanyl-tRNA(Ala) + AMP + diphosphate. In terms of biological role, catalyzes the attachment of alanine to tRNA(Ala) in a two-step reaction: alanine is first activated by ATP to form Ala-AMP and then transferred to the acceptor end of tRNA(Ala). Also edits incorrectly charged Ser-tRNA(Ala) and Gly-tRNA(Ala) via its editing domain. The chain is Alanine--tRNA ligase from Polynucleobacter asymbioticus (strain DSM 18221 / CIP 109841 / QLW-P1DMWA-1) (Polynucleobacter necessarius subsp. asymbioticus).